The following is a 414-amino-acid chain: Mannan endo-1,4-beta-mannosidase 2 (414 aa).

The N-terminal stretch at 1–25 (MAYFQRLISCIFVLFLLSLAFACEA) is a signal peptide. 2 residues coordinate substrate: Trp95 and Asn210. Catalysis depends on Glu211, which acts as the Proton donor. Tyr288 is a substrate binding site. Residue Glu328 is the Nucleophile of the active site. Trp370 lines the substrate pocket.

Belongs to the glycosyl hydrolase 5 (cellulase A) family.

It localises to the secreted. The enzyme catalyses Random hydrolysis of (1-&gt;4)-beta-D-mannosidic linkages in mannans, galactomannans and glucomannans.. Possesses endo-beta-mannanase activity in vitro. May be involved in seed germination by weakening the endosperm cap prior to radicle emergence. The polypeptide is Mannan endo-1,4-beta-mannosidase 2 (MAN2) (Solanum lycopersicum (Tomato)).